The primary structure comprises 23 residues: NADP-dependent malic enzyme (23 aa).

Belongs to the malic enzymes family. In terms of assembly, homotetramer.

The enzyme catalyses (S)-malate + NADP(+) = pyruvate + CO2 + NADPH. The catalysed reaction is oxaloacetate + H(+) = pyruvate + CO2. The polypeptide is NADP-dependent malic enzyme (Populus euphratica (Euphrates poplar)).